The primary structure comprises 225 residues: NAD(P)H-quinone oxidoreductase subunit K, chloroplastic (225 aa).

Residues cysteine 43, cysteine 44, cysteine 108, and cysteine 139 each contribute to the [4Fe-4S] cluster site.

It belongs to the complex I 20 kDa subunit family. As to quaternary structure, NDH is composed of at least 16 different subunits, 5 of which are encoded in the nucleus. [4Fe-4S] cluster is required as a cofactor.

The protein resides in the plastid. It is found in the chloroplast thylakoid membrane. The enzyme catalyses a plastoquinone + NADH + (n+1) H(+)(in) = a plastoquinol + NAD(+) + n H(+)(out). It catalyses the reaction a plastoquinone + NADPH + (n+1) H(+)(in) = a plastoquinol + NADP(+) + n H(+)(out). NDH shuttles electrons from NAD(P)H:plastoquinone, via FMN and iron-sulfur (Fe-S) centers, to quinones in the photosynthetic chain and possibly in a chloroplast respiratory chain. The immediate electron acceptor for the enzyme in this species is believed to be plastoquinone. Couples the redox reaction to proton translocation, and thus conserves the redox energy in a proton gradient. This Amborella trichopoda protein is NAD(P)H-quinone oxidoreductase subunit K, chloroplastic.